Here is a 166-residue protein sequence, read N- to C-terminus: Putative 4-hydroxy-4-methyl-2-oxoglutarate aldolase 3 (166 aa).

Position 2 is an N-acetylalanine (A2). Substrate contacts are provided by residues 81 to 84 (GGNL) and R103. D104 contacts a divalent metal cation.

This sequence belongs to the class II aldolase/RraA-like family. In terms of assembly, homotrimer. A divalent metal cation serves as cofactor.

The enzyme catalyses 4-hydroxy-4-methyl-2-oxoglutarate = 2 pyruvate. It carries out the reaction oxaloacetate + H(+) = pyruvate + CO2. In terms of biological role, catalyzes the aldol cleavage of 4-hydroxy-4-methyl-2-oxoglutarate (HMG) into 2 molecules of pyruvate. Also contains a secondary oxaloacetate (OAA) decarboxylase activity due to the common pyruvate enolate transition state formed following C-C bond cleavage in the retro-aldol and decarboxylation reactions. This is Putative 4-hydroxy-4-methyl-2-oxoglutarate aldolase 3 from Arabidopsis thaliana (Mouse-ear cress).